The chain runs to 130 residues: Large ribosomal subunit protein bL19 (130 aa).

Belongs to the bacterial ribosomal protein bL19 family.

Functionally, this protein is located at the 30S-50S ribosomal subunit interface and may play a role in the structure and function of the aminoacyl-tRNA binding site. The protein is Large ribosomal subunit protein bL19 of Psychrobacter arcticus (strain DSM 17307 / VKM B-2377 / 273-4).